Reading from the N-terminus, the 384-residue chain is Probable 2-heptyl-3-hydroxy-4(1H)-quinolone synthase AqdB2 (384 aa).

It belongs to the 3-hydroxybenzoate 6-hydroxylase family.

The enzyme catalyses 2-heptyl-4(1H)-quinolone + NADH + O2 + H(+) = 2-heptyl-3-hydroxy-4(1H)-quinolone + NAD(+) + H2O. In terms of biological role, involved in the degradation of the Pseudomonas aeruginosa quorum sensing signal molecule HHQ (2-heptyl-4-quinolone) to anthranilic acid. Probably catalyzes the hydroxylation of HHQ to PQS (2-heptyl-3-hydroxy-4-quinolone). In Rhodococcus erythropolis (Arthrobacter picolinophilus), this protein is Probable 2-heptyl-3-hydroxy-4(1H)-quinolone synthase AqdB2.